The following is a 666-amino-acid chain: Probable potassium transport system protein Kup (666 aa).

12 consecutive transmembrane segments (helical) span residues 16–36 (GFII…LYTM), 58–78 (ISLI…LIAL), 100–120 (PWLI…GALT), 141–161 (IYQN…VLFG), 165–185 (FGTG…FSFL), 221–241 (IFIL…YSDL), 253–273 (WPFV…WILA), 294–314 (VYLV…LISG), 343–363 (LYIP…VLAF), 373–393 (YGLA…YYLI), 399–419 (PILA…FFLA), and 424–444 (FMHG…VMFI).

This sequence belongs to the HAK/KUP transporter (TC 2.A.72) family.

It localises to the cell membrane. It carries out the reaction K(+)(in) + H(+)(in) = K(+)(out) + H(+)(out). Its function is as follows. Transport of potassium into the cell. Likely operates as a K(+):H(+) symporter. This chain is Probable potassium transport system protein Kup, found in Streptococcus pyogenes serotype M49 (strain NZ131).